Consider the following 486-residue polypeptide: MTTFYTVVSWLVILGYWVLIAGVTLRILMKRRAVPSAMAWLLIIYILPLVGIIAYLSVGELHLGKRRAERARAMWPSTAKWLNDLKACKHIFAQENSSVASSLFKLCERRQGIAGVKGNQLQLLTDSDDVMQALIRDIQLARHNIEMVFYIWQPGGMADQVAESLMAAARRGIHCRLMLDSAGSVAFFRSPWAAMMRNAGIEVVEALKVNLMRVFLRRMDLRQHRKMVMIDNYIAYTGSMNMVDPRFFKQDAGVGQWVDLMARMEGPVATAMGIVYSCDWEIETGKRILPPSPDVNIMPFEQASGHTIHTIASGPGFPEDLIHQALLTATYAAREYLIMTTPYFVPSDDLLHAICTAAQRGVDVSIILPRKNDSLLVGWASRAFFSELLAAGVKIYQFEGGLLHTKSVLVDGELSLVGTVNLDMRSLWLNFEITLVIDDTGFGADLAAVQDDYISRSRLLDARLWVKRPLWQRITERLFYFFSPLL.

Helical transmembrane passes span 3–23 and 38–58; these read TFYT…IAGV and MAWL…YLSV. 2 consecutive PLD phosphodiesterase domains span residues 219 to 246 and 399 to 426; these read MDLR…VDPR and EGGL…DMRS. Catalysis depends on residues His224, Lys226, Asp231, His404, Lys406, and Asp411.

The protein belongs to the phospholipase D family. Cardiolipin synthase subfamily. ClsA sub-subfamily.

It localises to the cell inner membrane. It carries out the reaction 2 a 1,2-diacyl-sn-glycero-3-phospho-(1'-sn-glycerol) = a cardiolipin + glycerol. Catalyzes the reversible phosphatidyl group transfer from one phosphatidylglycerol molecule to another to form cardiolipin (CL) (diphosphatidylglycerol) and glycerol. The protein is Cardiolipin synthase A of Salmonella arizonae (strain ATCC BAA-731 / CDC346-86 / RSK2980).